A 651-amino-acid polypeptide reads, in one-letter code: Threonine--tRNA ligase (651 aa).

The TGS domain occupies 1–61 (MPTIQLPDGS…DKDVSLRIIT (61 aa)). Positions 242–533 (DHRLLAKKMD…LLEESAGKLP (292 aa)) are catalytic. 3 residues coordinate Zn(2+): Cys333, His384, and His510. The interval 631–651 (ISQRSRKSPAPSPLFPVGGES) is disordered.

Belongs to the class-II aminoacyl-tRNA synthetase family. In terms of assembly, homodimer. The cofactor is Zn(2+).

The protein resides in the cytoplasm. The catalysed reaction is tRNA(Thr) + L-threonine + ATP = L-threonyl-tRNA(Thr) + AMP + diphosphate + H(+). In terms of biological role, catalyzes the attachment of threonine to tRNA(Thr) in a two-step reaction: L-threonine is first activated by ATP to form Thr-AMP and then transferred to the acceptor end of tRNA(Thr). Also edits incorrectly charged L-seryl-tRNA(Thr). The polypeptide is Threonine--tRNA ligase (Coxiella burnetii (strain RSA 493 / Nine Mile phase I)).